We begin with the raw amino-acid sequence, 258 residues long: Protein CHAPERONE-LIKE PROTEIN OF POR1, chloroplastic (258 aa).

A chloroplast-targeting transit peptide spans 1 to 48 (MSSSLLLSGSTVSSSFIAPSKPSLVRNSSKTSLLPFRNVSRSFKTVKC). Position 49 is an N-acetylthreonine (T49). The interval 67–122 (WDPYKRLGVSPYASEEEIWASRNFLLQQYAGHERSEESIEGAFEKLLMSSFIRRKK) is J-like domain required for holdase chaperone activity. The next 3 helical transmembrane spans lie at 162-182 (FLFA…GPAF), 207-227 (LIGI…IPMI), and 237-257 (TLEL…CTFL).

Belongs to the chaperone-like protein of POR1 protein family. As to quaternary structure, interacts with PORB in chloroplast. Interacts with PORA during plastid import. Expressed ubiquitously with higher levels in young leaves, flowers, and the root elongation zone.

It localises to the mitochondrion membrane. It is found in the plastid. The protein resides in the chloroplast envelope. Its subcellular location is the chloroplast thylakoid membrane. Its function is as follows. Essential protein required during embryogenesis. Exhibits holdase chaperone activity involved in the stabilization of NADPH:protochlorophyllide oxidoreductase (POR) proteins against photooxidative stress during POR proteins import into chloroplasts. Required for chloroplast biogenesis and development. When expressed in yeast, triggers mitochondria-mediated cell death associated with the loss of mitochondrial membrane potential. This Arabidopsis thaliana (Mouse-ear cress) protein is Protein CHAPERONE-LIKE PROTEIN OF POR1, chloroplastic.